A 252-amino-acid chain; its full sequence is Imidazole glycerol phosphate synthase subunit HisF (252 aa).

Active-site residues include Asp11 and Asp130.

It belongs to the HisA/HisF family. As to quaternary structure, heterodimer of HisH and HisF.

It is found in the cytoplasm. It catalyses the reaction 5-[(5-phospho-1-deoxy-D-ribulos-1-ylimino)methylamino]-1-(5-phospho-beta-D-ribosyl)imidazole-4-carboxamide + L-glutamine = D-erythro-1-(imidazol-4-yl)glycerol 3-phosphate + 5-amino-1-(5-phospho-beta-D-ribosyl)imidazole-4-carboxamide + L-glutamate + H(+). Its pathway is amino-acid biosynthesis; L-histidine biosynthesis; L-histidine from 5-phospho-alpha-D-ribose 1-diphosphate: step 5/9. In terms of biological role, IGPS catalyzes the conversion of PRFAR and glutamine to IGP, AICAR and glutamate. The HisF subunit catalyzes the cyclization activity that produces IGP and AICAR from PRFAR using the ammonia provided by the HisH subunit. The chain is Imidazole glycerol phosphate synthase subunit HisF from Staphylococcus aureus (strain Mu3 / ATCC 700698).